A 348-amino-acid polypeptide reads, in one-letter code: Anthranilate phosphoribosyltransferase (348 aa).

5-phospho-alpha-D-ribose 1-diphosphate-binding positions include Gly89, 92-93 (GD), Thr97, 99-102 (NIST), 117-125 (KHGNRSVSS), and Ser129. Gly89 contacts anthranilate. Residue Ser101 participates in Mg(2+) binding. Asn120 contacts anthranilate. Residue Arg175 participates in anthranilate binding. Mg(2+)-binding residues include Asp233 and Glu234.

Belongs to the anthranilate phosphoribosyltransferase family. In terms of assembly, homodimer. Requires Mg(2+) as cofactor.

It carries out the reaction N-(5-phospho-beta-D-ribosyl)anthranilate + diphosphate = 5-phospho-alpha-D-ribose 1-diphosphate + anthranilate. It functions in the pathway amino-acid biosynthesis; L-tryptophan biosynthesis; L-tryptophan from chorismate: step 2/5. In terms of biological role, catalyzes the transfer of the phosphoribosyl group of 5-phosphorylribose-1-pyrophosphate (PRPP) to anthranilate to yield N-(5'-phosphoribosyl)-anthranilate (PRA). This Shewanella sp. (strain W3-18-1) protein is Anthranilate phosphoribosyltransferase.